The sequence spans 321 residues: Putative membrane-bound redox modulator Alx (321 aa).

At 1-6 (MNTVGT) the chain is on the periplasmic side. The chain crosses the membrane as a helical span at residues 7 to 27 (PLLWGGFAVVVAIMLAIDLLL). The Cytoplasmic portion of the chain corresponds to 28–43 (QGRRGAHAMTMKQAAA). The chain crosses the membrane as a helical span at residues 44–64 (WSLVWVTLSLLFNAAFWWYLV). Residues 65–89 (QTEGRAVADPQALAFLTGYLIEKSL) lie on the Periplasmic side of the membrane. The helical transmembrane segment at 90–110 (AVDNVFVWLMLFSYFSVPAAL) threads the bilayer. Topologically, residues 111-113 (QRR) are cytoplasmic. The helical transmembrane segment at 114 to 134 (VLVYGVLGAIVLRTIMIFTGS) threads the bilayer. W135 is a topological domain (periplasmic). Residues 136 to 156 (LISQFDWILYIFGAFLLFTGV) form a helical membrane-spanning segment. At 157-198 (KMALAHEDESGIGDKPLVRWLRGHLRMTDTIDNEHFFVRKNG) the chain is on the cytoplasmic side. A helical membrane pass occupies residues 199–219 (LLYATPLMLVLILVELSDVIF). Residues 220 to 225 (AVDSIP) are Periplasmic-facing. A helical transmembrane segment spans residues 226-246 (AIFAVTTDPFIVLTSNLFAIL). Residues 247 to 261 (GLRAMYFLLAGVAER) lie on the Cytoplasmic side of the membrane. A helical membrane pass occupies residues 262 to 282 (FSMLKYGLAVILVFIGIKMLI). Residues 283-286 (VDFY) lie on the Periplasmic side of the membrane. A helical membrane pass occupies residues 287–307 (HIPIAVSLGVVFGILVMTFII). The Cytoplasmic segment spans residues 308–321 (NAWVNYRHDKQRGG).

This sequence belongs to the TerC family.

It localises to the cell inner membrane. Its function is as follows. Has been proposed to be a redox modulator. The chain is Putative membrane-bound redox modulator Alx from Escherichia coli (strain K12).